The sequence spans 1314 residues: Enfumafungin synthase efuA (1314 aa).

Residues 1–680 (MPSYHNTDKT…RYIDKASRQG (680 aa)) form a terpenne cyclase region. 2 PFTB repeats span residues 19–62 (LQQA…ELSL) and 66–107 (GPEI…RILG). Transmembrane regions (helical) follow at residues 133-153 (FFTRFFLATFGLVPWTAIPQM), 155-175 (AELILLPTFMFLNIYVLSSWA), and 230-250 (YQWIEFAFTLLDHILALFGGL). Residues 260–300 (LKRCTAWLLEHQEESGDWAGFFPPIHGSIWALLLDGFSFQS) form a PFTB 3 repeat. D395 acts as the Proton donor in catalysis. 2 PFTB repeats span residues 417–458 (VMNG…DSLV) and 546–597 (CMRT…LRFR). The interval 681-1314 (IETLRIPSSS…ADSVLDIEEK (634 aa)) is glycosyltransferase. The helical transmembrane segment at 1200–1220 (AIVQLLYGFTTTILALFGWLK) threads the bilayer. The disordered stretch occupies residues 1289 to 1314 (DSGASESSRSSLDGGHADSVLDIEEK). Residues 1292–1302 (ASESSRSSLDG) are compositionally biased toward low complexity.

In the N-terminal section; belongs to the terpene cyclase/mutase family. This sequence in the C-terminal section; belongs to the glycosyltransferase 28 family.

It is found in the membrane. It functions in the pathway secondary metabolite biosynthesis; terpenoid biosynthesis. In terms of biological role, terpene cyclase-glycosyl transferase fusion protein; part of the gene cluster that mediates the biosynthesis of enfumafungin, a glycosylated fernene-type triterpenoid with potent antifungal activity, mediated by its interaction with beta-1,3-glucan synthase and the fungal cell wall. The pathway begins with the terpene cyclase-glycosyl transferase fusion protein that most likely uses 2,3-oxidosqualene as substrate and catalyzes glycosylation immediately after cyclization. The fernene glycoside then could be processed by the desaturase efuI which catalyzes isomerization of a double bond established by efuA to form the core structure. The latter would then undergo a series of hydroxylations in unknown order at C-2, C-19, C-23 and C-25, which would be catalyzed by two of the three cytochrome P450 monooxygenases efuB, efuG or efuH. The hydroxy-group at C-25 becomes oxidized by the dehydrogenase efuE to enable a spontaneous, non-enzymatic hemiacetal formation with C-23. After hydroxylation at C-2, acetylation by the acetyltransferase efuC takes place. The final steps in enfumafungin biosynthesis require expansion of the 5-membered ring by lactonization via a Baeyer-Villiger reaction mediated by one of the BGC's cytochrome P450 monooxygenases (efuB, efuG or efuH) followed by ring cleavage. This type of reaction would establish a double bond between C-20 and C-21 which could be reduced by the reductase efuL to form the final product. The sequence is that of Enfumafungin synthase efuA from Hormonema carpetanum.